An 818-amino-acid chain; its full sequence is Protein LDB19 (818 aa).

A disordered region spans residues 1-25 (MAFSRLTSTHQSNHNGYSNSNKKGQ). The residue at position 93 (T93) is a Phosphothreonine. Positions 352–361 (QVKIKESEKS) are enriched in basic and acidic residues. Positions 352–374 (QVKIKESEKSKKPRSHIKRYGEL) are disordered. Position 384 is a phosphoserine (S384). The segment at 388–436 (MPSQRLPGEPGREQAPNSSGPASTGNVGLDDENPVNEDEEDQPGSEFIH) is disordered. Polar residues predominate over residues 402–413 (APNSSGPASTGN). Positions 416 to 430 (LDDENPVNEDEEDQP) are enriched in acidic residues. A Glycyl lysine isopeptide (Lys-Gly) (interchain with G-Cter in ubiquitin) cross-link involves residue K486. Disordered regions lie at residues 568–590 (QPIRKPNSKNKKETNNNTMNVHN) and 607–644 (TPKVRRMGPEDITPVNSNKSNHSTNKEKASNGASNSNI). At T619 the chain carries Phosphothreonine. Positions 620–629 (PVNSNKSNHS) are enriched in polar residues. S808 bears the Phosphoserine mark.

It belongs to the LDB19 family.

The protein resides in the cytoplasm. It is found in the golgi apparatus. Its function is as follows. May be involved in protein-linked oligosaccharide phosphorylation since the deletion reduces the negative charge of the cell surface. Involved in the resistance to EDTA, cadmium chloride, cycloheximide, 6-dimethylaminopurine, methyl caffeate, beta-chloro-L-alanine, caffeine and cerulenin. The protein is Protein LDB19 (LDB19) of Saccharomyces cerevisiae (strain ATCC 204508 / S288c) (Baker's yeast).